The chain runs to 290 residues: Ribosomal RNA small subunit methyltransferase A (290 aa).

Positions 27, 29, 54, 75, 100, and 125 each coordinate S-adenosyl-L-methionine.

Belongs to the class I-like SAM-binding methyltransferase superfamily. rRNA adenine N(6)-methyltransferase family. RsmA subfamily.

Its subcellular location is the cytoplasm. The catalysed reaction is adenosine(1518)/adenosine(1519) in 16S rRNA + 4 S-adenosyl-L-methionine = N(6)-dimethyladenosine(1518)/N(6)-dimethyladenosine(1519) in 16S rRNA + 4 S-adenosyl-L-homocysteine + 4 H(+). In terms of biological role, specifically dimethylates two adjacent adenosines (A1518 and A1519) in the loop of a conserved hairpin near the 3'-end of 16S rRNA in the 30S particle. May play a critical role in biogenesis of 30S subunits. This chain is Ribosomal RNA small subunit methyltransferase A, found in Streptococcus agalactiae serotype Ia (strain ATCC 27591 / A909 / CDC SS700).